The primary structure comprises 276 residues: Exosome complex component RRP43 (276 aa).

A2 is subject to N-acetylalanine.

This sequence belongs to the RNase PH family. Component of the RNA exosome core complex (Exo-9), composed of EXOSC1, EXOSC2, EXOSC3, EXOSC4, EXOSC5, EXOSC6, EXOSC7, EXOSC8 and EXOSC9; within the complex interacts with EXOSC5 and EXOSC6. The catalytically inactive RNA exosome core complex (Exo-9) associates with the catalytic subunit EXOSC10/RRP6. Exo-9 may associate with DIS3 to form the nucleolar exosome complex, or DIS3L to form the cytoplasmic exosome complex. Exo-9 is formed by a hexameric base ring consisting of the heterodimers EXOSC4-EXOSC9, EXOSC5-EXOSC8 and EXOSC6-EXOSC7, and a cap ring consisting of EXOSC1, EXOSC2 and EXOSC3. The RNA exosome complex associates with cofactors C1D/RRP47, MPHOSPH6/MPP6 and MTREX/MTR4. Binds outer membrane protein opap from Neisseria gonorrhoeae.

It is found in the cytoplasm. Its subcellular location is the nucleus. The protein resides in the nucleolus. Non-catalytic component of the RNA exosome complex which has 3'-&gt;5' exoribonuclease activity and participates in a multitude of cellular RNA processing and degradation events. In the nucleus, the RNA exosome complex is involved in proper maturation of stable RNA species such as rRNA, snRNA and snoRNA, in the elimination of RNA processing by-products and non-coding 'pervasive' transcripts, such as antisense RNA species and promoter-upstream transcripts (PROMPTs), and of mRNAs with processing defects, thereby limiting or excluding their export to the cytoplasm. The RNA exosome may be involved in Ig class switch recombination (CSR) and/or Ig variable region somatic hypermutation (SHM) by targeting AICDA deamination activity to transcribed dsDNA substrates. In the cytoplasm, the RNA exosome complex is involved in general mRNA turnover and specifically degrades inherently unstable mRNAs containing AU-rich elements (AREs) within their 3' untranslated regions, and in RNA surveillance pathways, preventing translation of aberrant mRNAs. It seems to be involved in degradation of histone mRNA. The catalytic inactive RNA exosome core complex of 9 subunits (Exo-9) is proposed to play a pivotal role in the binding and presentation of RNA for ribonucleolysis, and to serve as a scaffold for the association with catalytic subunits and accessory proteins or complexes. EXOSC8 binds to ARE-containing RNAs. The polypeptide is Exosome complex component RRP43 (EXOSC8) (Homo sapiens (Human)).